A 361-amino-acid chain; its full sequence is Alanine racemase (361 aa).

The active-site Proton acceptor; specific for D-alanine is Lys34. Residue Lys34 is modified to N6-(pyridoxal phosphate)lysine. A substrate-binding site is contributed by Arg129. The active-site Proton acceptor; specific for L-alanine is the Tyr254. Met302 is a binding site for substrate.

This sequence belongs to the alanine racemase family. Requires pyridoxal 5'-phosphate as cofactor.

The catalysed reaction is L-alanine = D-alanine. It carries out the reaction L-serine = D-serine. It participates in amino-acid biosynthesis; D-alanine biosynthesis; D-alanine from L-alanine: step 1/1. Catalyzes the interconversion of L-alanine and D-alanine. Likely plays an important role in supplying D-alanine, which is an indispensable constituent in the biosynthesis of bacterial cell-wall peptidoglycan. To a lesser extent, is also able to racemize L-serine and D-serine. Does not act on other proteinogenic amino-acids. This Vibrio cholerae serotype O1 (strain ATCC 39315 / El Tor Inaba N16961) protein is Alanine racemase (alr1).